A 267-amino-acid chain; its full sequence is 3-methyl-2-oxobutanoate hydroxymethyltransferase (267 aa).

Positions 46 and 85 each coordinate Mg(2+). 3-methyl-2-oxobutanoate contacts are provided by residues 46–47, D85, and K115; that span reads DS. E117 is a Mg(2+) binding site. E184 (proton acceptor) is an active-site residue.

Belongs to the PanB family. In terms of assembly, homodecamer; pentamer of dimers. It depends on Mg(2+) as a cofactor.

The protein localises to the cytoplasm. The catalysed reaction is 3-methyl-2-oxobutanoate + (6R)-5,10-methylene-5,6,7,8-tetrahydrofolate + H2O = 2-dehydropantoate + (6S)-5,6,7,8-tetrahydrofolate. The protein operates within cofactor biosynthesis; (R)-pantothenate biosynthesis; (R)-pantoate from 3-methyl-2-oxobutanoate: step 1/2. In terms of biological role, catalyzes the reversible reaction in which hydroxymethyl group from 5,10-methylenetetrahydrofolate is transferred onto alpha-ketoisovalerate to form ketopantoate. The sequence is that of 3-methyl-2-oxobutanoate hydroxymethyltransferase from Citrifermentans bemidjiense (strain ATCC BAA-1014 / DSM 16622 / JCM 12645 / Bem) (Geobacter bemidjiensis).